Reading from the N-terminus, the 127-residue chain is Large ribosomal subunit protein uL18 (127 aa).

The protein belongs to the universal ribosomal protein uL18 family. In terms of assembly, part of the 50S ribosomal subunit; part of the 5S rRNA/L5/L18/L25 subcomplex. Contacts the 5S and 23S rRNAs.

Functionally, this is one of the proteins that bind and probably mediate the attachment of the 5S RNA into the large ribosomal subunit, where it forms part of the central protuberance. The protein is Large ribosomal subunit protein uL18 of Streptomyces griseus subsp. griseus (strain JCM 4626 / CBS 651.72 / NBRC 13350 / KCC S-0626 / ISP 5235).